A 400-amino-acid chain; its full sequence is Probable splicing factor YJU2B (400 aa).

A disordered region spans residues 1-26 (MGERKGVNKYYPPDFNPEKHGSLNRY). Residue Ser-40 is modified to Phosphoserine. Positions 182–214 (LNSMLRKRFREKKKAMQEEEERDQALQAKASLA) form a coiled coil. The disordered stretch occupies residues 255 to 400 (WFPSTPGASA…VADYSGSESE (146 aa)). A compositionally biased stretch (polar residues) spans 283 to 292 (RRATPTSSPV). Ser-310 is subject to Phosphoserine. Over residues 327-341 (EGTNQNRPVSPQDCS) the composition is skewed to polar residues. The span at 364 to 380 (PQPPPDTSPEAPNPQDT) shows a compositional bias: pro residues.

Belongs to the CWC16 family.

Its subcellular location is the nucleus. Functionally, may be involved in mRNA splicing. The sequence is that of Probable splicing factor YJU2B (YJU2B) from Bos taurus (Bovine).